A 401-amino-acid chain; its full sequence is Ascaroside receptor GPR3 (401 aa).

The Extracellular portion of the chain corresponds to 1–16 (MQPFGDAWSQRHLAGV). Residues 17–37 (VLAGSVLSIVGSLYMILGFFF) form a helical membrane-spanning segment. The Cytoplasmic portion of the chain corresponds to 38–47 (LRECRSFRHK). Residues 48–68 (LILGLAVSDLLLALNFFIPSL) form a helical membrane-spanning segment. At 69–93 (SMVTGREISSPWNEGFCSANGFLMQ) the chain is on the extracellular side. C85 and C159 form a disulfide bridge. A helical transmembrane segment spans residues 94-114 (LFFAQIDVWQISIALITLLML). The Cytoplasmic segment spans residues 115–128 (SGPSMVLKWIRENV). The chain crosses the membrane as a helical span at residues 129–149 (WAVWLFPWLVSLIAAFFAFGF). The Extracellular portion of the chain corresponds to 150-175 (WDYANVGGFCWLGSRNIRLYFNYIPR). Residues 176–196 (WIIILVCLVIYIAVYRLILHA) form a helical membrane-spanning segment. At 197–294 (RRRANIQKTY…QKQVRKIAIQ (98 aa)) the chain is on the cytoplasmic side. A disordered region spans residues 206–259 (YRGRASDRAPPQPVTTTAPATNPESEKVNPDEISSGNGSSSLDTSRSGSSTGFT). Positions 239–257 (SSGNGSSSLDTSRSGSSTG) are enriched in low complexity. Residues 295–315 (MISYPLAYAVLWAIPTIVMII) traverse the membrane as a helical segment. At 316 to 321 (QVARGG) the chain is on the extracellular side. The helical transmembrane segment at 322–342 (EGVSIHVEGLAKMLLVFNGFV) threads the bilayer. Residues 343 to 401 (DAHVYGFNERTAMGWRQRIRPAAQEDDEEAAGTSGGVHEVVSRPEPTLKNPNVWQQNMV) lie on the Cytoplasmic side of the membrane. The disordered stretch occupies residues 362 to 401 (RPAAQEDDEEAAGTSGGVHEVVSRPEPTLKNPNVWQQNMV). Positions 391–401 (KNPNVWQQNMV) are enriched in polar residues.

This sequence belongs to the G-protein coupled receptor 1 family. As to quaternary structure, interacts with ascaroside receptor GPR2; may form a functional heterodimer. Interacts with guanine nucleotide-binding protein alpha GPA2; to activate adenylate cyclase and positively regulate nematode trap formation.

It localises to the cell membrane. Its function is as follows. G protein-coupled receptor that senses nematode ascaroside pheromones and signals via adenylate cyclase to positively regulate trap formation for nematode capture. This chain is Ascaroside receptor GPR3, found in Arthrobotrys oligospora (strain ATCC 24927 / CBS 115.81 / DSM 1491) (Nematode-trapping fungus).